Reading from the N-terminus, the 173-residue chain is RNA pyrophosphohydrolase (173 aa).

The region spanning 6 to 149 (GFRANVGIII…KRDVYRKVMK (144 aa)) is the Nudix hydrolase domain. The Nudix box motif lies at 38-59 (GGVDEGESAEEAMYRELYEEVG).

The protein belongs to the Nudix hydrolase family. RppH subfamily. It depends on a divalent metal cation as a cofactor.

Its function is as follows. Accelerates the degradation of transcripts by removing pyrophosphate from the 5'-end of triphosphorylated RNA, leading to a more labile monophosphorylated state that can stimulate subsequent ribonuclease cleavage. This chain is RNA pyrophosphohydrolase, found in Shewanella piezotolerans (strain WP3 / JCM 13877).